We begin with the raw amino-acid sequence, 98 residues long: Small ribosomal subunit protein uS17 (98 aa).

This sequence belongs to the universal ribosomal protein uS17 family. As to quaternary structure, part of the 30S ribosomal subunit.

Its function is as follows. One of the primary rRNA binding proteins, it binds specifically to the 5'-end of 16S ribosomal RNA. The protein is Small ribosomal subunit protein uS17 of Mesomycoplasma hyopneumoniae (strain 232) (Mycoplasma hyopneumoniae).